Consider the following 252-residue polypeptide: Probable NADP-dependent dehydrogenase HI_1430 (252 aa).

7-31 (LVTGATAGFGLAICKKLIEAGYKVI) contacts NADP(+). Substrate is bound at residue S137. The active-site Proton acceptor is Y150.

It belongs to the short-chain dehydrogenases/reductases (SDR) family.

The protein is Probable NADP-dependent dehydrogenase HI_1430 of Haemophilus influenzae (strain ATCC 51907 / DSM 11121 / KW20 / Rd).